Reading from the N-terminus, the 638-residue chain is Pentatricopeptide repeat-containing protein At1g59720, chloroplastic/mitochondrial (638 aa).

The transit peptide at 1–40 (MVVRSIIVSPPTTITYYHPMSIGLLVHPLSPHIPPASSPS) directs the protein to the chloroplast and mitochondrion. 10 PPR repeats span residues 82 to 112 (TLFLYGKILQLSSSFSDVNYAFRVFDSIENH), 113 to 148 (SSFMWNTLIRACAHDVSRKEEAFMLYRKMLERGESS), 150 to 184 (DKHTFPFVLKACAYIFGFSEGKQVHCQIVKHGFGG), 185 to 215 (DVYVNNGLIHLYGSCGCLDLARKVFDEMPER), 216 to 246 (SLVSWNSMIDALVRFGEYDSALQLFREMQRS), 250 to 280 (DGYTMQSVLSACAGLGSLSLGTWAHAFLLRK), 288 to 318 (DVLVKNSLIEMYCKCGSLRMAEQVFQGMQKR), 319 to 353 (DLASWNAMILGFATHGRAEEAMNFFDRMVDKRENV), 356 to 390 (NSVTFVGLLIACNHRGFVNKGRQYFDMMVRDYCIE), and 392 to 422 (ALEHYGCIVDLIARAGYITEAIDMVMSMPMK). The tract at residues 427-510 (IWRSLLDACC…EPGCSSIEIN (84 aa)) is type E motif. Positions 511–541 (GISHEFFAGDTSHPQTKQIYQQLKVIDDRLR) are type E(+) motif. The interval 542-638 (SIGYLPDRSQ…DGSCSCLDYW (97 aa)) is type DYW motif.

It belongs to the PPR family. PCMP-H subfamily. Interacts with ORRM1. Interacts with VAR3/OZ1.

The protein resides in the plastid. The protein localises to the chloroplast. It localises to the mitochondrion. Its function is as follows. Involved in multiple sites RNA editing events in chloroplasts. Involved in the editing of the site 2 of ndhB (ndhB-2) and site 3 of ndhD (ndhD-3) transcripts, which are two plastid-encoded subunits of the chloroplast NAD(P)H dehydrogenase (NDH) complex. Required for the activity of the NDH complex of the photosynthetic electron transport chain. The chain is Pentatricopeptide repeat-containing protein At1g59720, chloroplastic/mitochondrial (PCMP-H51) from Arabidopsis thaliana (Mouse-ear cress).